We begin with the raw amino-acid sequence, 360 residues long: MIASVGDSRYYPKSVANGEKSDQRERLVSAIPVEDDSSFELKLRPQWLREFIGQPKVKENLAVAIEAARSRGEALDHVLLYGPPGLGKTTLANIIANEMQAQFQQTSGPTLQIKGDLTAILTNVRDKQVLFIDEVHRLQPALEELLYSAVEDYKLDIIIGQGPSARTHTIDVAPFTLVAATTRAGLLSAPLRSRFGIVLRLEFYTTEDLKIILKRSAEILNVEIDEGGAAEIATRCRGTPRIANRLLRRVRDYAQVRGAGKIDRETAQKALEMLEVDQHGFDEVDRRLMLTIIEKYQGGPVGLNTLAASLAEETDAIEEIYEPFLIQLGFLDRTPRGRVATHLAYEYFKMKPPKKQDSLF.

Residues 1 to 23 (MIASVGDSRYYPKSVANGEKSDQ) are disordered. Residues 12–204 (PKSVANGEKS…FGIVLRLEFY (193 aa)) form a large ATPase domain (RuvB-L) region. ATP is bound by residues L43, R44, G85, K88, T89, T90, 151–153 (EDY), R194, Y204, and R241. T89 provides a ligand contact to Mg(2+). The small ATPAse domain (RuvB-S) stretch occupies residues 205–275 (TTEDLKIILK…TAQKALEMLE (71 aa)). The interval 278–360 (QHGFDEVDRR…KPPKKQDSLF (83 aa)) is head domain (RuvB-H). 2 residues coordinate DNA: R333 and R338.

Belongs to the RuvB family. In terms of assembly, homohexamer. Forms an RuvA(8)-RuvB(12)-Holliday junction (HJ) complex. HJ DNA is sandwiched between 2 RuvA tetramers; dsDNA enters through RuvA and exits via RuvB. An RuvB hexamer assembles on each DNA strand where it exits the tetramer. Each RuvB hexamer is contacted by two RuvA subunits (via domain III) on 2 adjacent RuvB subunits; this complex drives branch migration. In the full resolvosome a probable DNA-RuvA(4)-RuvB(12)-RuvC(2) complex forms which resolves the HJ.

It is found in the cytoplasm. The catalysed reaction is ATP + H2O = ADP + phosphate + H(+). Functionally, the RuvA-RuvB-RuvC complex processes Holliday junction (HJ) DNA during genetic recombination and DNA repair, while the RuvA-RuvB complex plays an important role in the rescue of blocked DNA replication forks via replication fork reversal (RFR). RuvA specifically binds to HJ cruciform DNA, conferring on it an open structure. The RuvB hexamer acts as an ATP-dependent pump, pulling dsDNA into and through the RuvAB complex. RuvB forms 2 homohexamers on either side of HJ DNA bound by 1 or 2 RuvA tetramers; 4 subunits per hexamer contact DNA at a time. Coordinated motions by a converter formed by DNA-disengaged RuvB subunits stimulates ATP hydrolysis and nucleotide exchange. Immobilization of the converter enables RuvB to convert the ATP-contained energy into a lever motion, pulling 2 nucleotides of DNA out of the RuvA tetramer per ATP hydrolyzed, thus driving DNA branch migration. The RuvB motors rotate together with the DNA substrate, which together with the progressing nucleotide cycle form the mechanistic basis for DNA recombination by continuous HJ branch migration. Branch migration allows RuvC to scan DNA until it finds its consensus sequence, where it cleaves and resolves cruciform DNA. This is Holliday junction branch migration complex subunit RuvB from Koribacter versatilis (strain Ellin345).